The primary structure comprises 521 residues: Phosphoenolpyruvate carboxykinase (ATP) (521 aa).

Residues Arg-52, Tyr-186, and Lys-192 each coordinate substrate. ATP-binding positions include Lys-192, His-211, and 227 to 235; that span reads GLSGTGKTT. Mn(2+)-binding residues include Lys-192 and His-211. Asp-248 is a binding site for Mn(2+). ATP contacts are provided by residues Glu-276, Arg-313, 432–433, and Thr-438; that span reads RI. Arg-313 contributes to the substrate binding site.

This sequence belongs to the phosphoenolpyruvate carboxykinase (ATP) family. Mn(2+) serves as cofactor.

Its subcellular location is the cytoplasm. The enzyme catalyses oxaloacetate + ATP = phosphoenolpyruvate + ADP + CO2. It participates in carbohydrate biosynthesis; gluconeogenesis. Involved in the gluconeogenesis. Catalyzes the conversion of oxaloacetate (OAA) to phosphoenolpyruvate (PEP) through direct phosphoryl transfer between the nucleoside triphosphate and OAA. The sequence is that of Phosphoenolpyruvate carboxykinase (ATP) from Caldanaerobacter subterraneus subsp. tengcongensis (strain DSM 15242 / JCM 11007 / NBRC 100824 / MB4) (Thermoanaerobacter tengcongensis).